The chain runs to 470 residues: ATP synthase subunit beta (470 aa).

155–162 (GGAGVGKT) lines the ATP pocket.

The protein belongs to the ATPase alpha/beta chains family. As to quaternary structure, F-type ATPases have 2 components, CF(1) - the catalytic core - and CF(0) - the membrane proton channel. CF(1) has five subunits: alpha(3), beta(3), gamma(1), delta(1), epsilon(1). CF(0) has three main subunits: a(1), b(2) and c(9-12). The alpha and beta chains form an alternating ring which encloses part of the gamma chain. CF(1) is attached to CF(0) by a central stalk formed by the gamma and epsilon chains, while a peripheral stalk is formed by the delta and b chains.

The protein localises to the cell inner membrane. The enzyme catalyses ATP + H2O + 4 H(+)(in) = ADP + phosphate + 5 H(+)(out). Functionally, produces ATP from ADP in the presence of a proton gradient across the membrane. The catalytic sites are hosted primarily by the beta subunits. This Oleidesulfovibrio alaskensis (strain ATCC BAA-1058 / DSM 17464 / G20) (Desulfovibrio alaskensis) protein is ATP synthase subunit beta.